The primary structure comprises 407 residues: Peptidase T (407 aa).

His77 is a binding site for Zn(2+). Residue Asp79 is part of the active site. Asp138 is a binding site for Zn(2+). The active-site Proton acceptor is Glu172. Glu173, Asp195, and His377 together coordinate Zn(2+).

The protein belongs to the peptidase M20B family. Zn(2+) is required as a cofactor.

The protein resides in the cytoplasm. The catalysed reaction is Release of the N-terminal residue from a tripeptide.. In terms of biological role, cleaves the N-terminal amino acid of tripeptides. The protein is Peptidase T of Aeromonas salmonicida (strain A449).